The sequence spans 356 residues: tRNA-specific 2-thiouridylase MnmA 2 (356 aa).

ATP-binding positions include 8–15 (GMSGGVDS) and Met34. Residue Cys103 is the Nucleophile of the active site. Cysteines 103 and 199 form a disulfide. An ATP-binding site is contributed by Gly127. Residues 149–151 (KDQ) are interaction with tRNA. Cys199 functions as the Cysteine persulfide intermediate in the catalytic mechanism. Residues 305-306 (RY) form an interaction with tRNA region.

This sequence belongs to the MnmA/TRMU family.

Its subcellular location is the cytoplasm. The catalysed reaction is S-sulfanyl-L-cysteinyl-[protein] + uridine(34) in tRNA + AH2 + ATP = 2-thiouridine(34) in tRNA + L-cysteinyl-[protein] + A + AMP + diphosphate + H(+). Catalyzes the 2-thiolation of uridine at the wobble position (U34) of tRNA, leading to the formation of s(2)U34. The protein is tRNA-specific 2-thiouridylase MnmA 2 of Clostridium botulinum (strain Okra / Type B1).